The chain runs to 246 residues: Mast cell protease 2 (246 aa).

Residues 1–19 (MHRPPLPLVLLLLCCRAQA) form the signal peptide. A propeptide spans 20 to 21 (GE) (activation peptide). Positions 22 to 244 (IIGGTESKPH…YRPWIDEVLK (223 aa)) constitute a Peptidase S1 domain. An intrachain disulfide couples Cys-51 to Cys-67. Residues His-66 and Asp-109 each act as charge relay system in the active site. Asn-120 carries an N-linked (GlcNAc...) asparagine glycan. 2 disulfides stabilise this stretch: Cys-143–Cys-208 and Cys-174–Cys-187. Ser-202 (charge relay system) is an active-site residue.

It belongs to the peptidase S1 family. Granzyme subfamily.

It localises to the secreted. Its subcellular location is the cytoplasmic granule. In terms of biological role, putative mast cell chymase. This Ovis aries (Sheep) protein is Mast cell protease 2.